Consider the following 242-residue polypeptide: Polycomb group RING finger protein 3 (242 aa).

Residues 17–56 form an RING-type zinc finger; the sequence is CRLCSGYLIDATTVTECLHTFCRSCLVKYLEENNTCPTCR. The disordered stretch occupies residues 115 to 149; the sequence is AKQHLDPHRNGETKADDSSNKEAAEEKQEEDGDYH. Over residues 117 to 140 the composition is skewed to basic and acidic residues; the sequence is QHLDPHRNGETKADDSSNKEAAEE. The segment at 132–242 is interaction with BCORL1; it reads SSNKEAAEEK…LHYRPKMDLL (111 aa).

Component of a PRC1-like complex that contains PCGF3, RNF2 and RYBP. Interacts with CBX6, CBX7 and CBX8. Interacts with BCORL1.

The protein localises to the nucleus. The protein resides in the nucleoplasm. Component of a Polycomb group (PcG) multiprotein PRC1-like complex, a complex class required to maintain the transcriptionally repressive state of many genes, including Hox genes, throughout development. PcG PRC1 complex acts via chromatin remodeling and modification of histones; it mediates monoubiquitination of histone H2A 'Lys-119', rendering chromatin heritably changed in its expressibility. Within the PRC1-like complex, regulates RNF2 ubiquitin ligase activity. Plays a redundant role with PCGF5 as part of a PRC1-like complex that mediates monoubiquitination of histone H2A 'Lys-119' on the X chromosome and is required for normal silencing of one copy of the X chromosome in XX females. The sequence is that of Polycomb group RING finger protein 3 (PCGF3) from Bos taurus (Bovine).